Reading from the N-terminus, the 582-residue chain is Myoneurin (582 aa).

The 66-residue stretch at 24-89 (CDCTIVIGEF…IYTGTLNLDS (66 aa)) folds into the BTB domain. The interval 169–197 (QGALAKKSSQTKKKKKAFNSPKTGQNKTV) is disordered. 2 short sequence motifs (nuclear localization signal) span residues 174–190 (KKSS…NSPK) and 257–262 (KRKRGK). The segment covering 188-197 (SPKTGQNKTV) has biased composition (polar residues). Position 289 is a phosphoserine (Ser-289). The segment at 302–324 (PMCNTRGKVFSEASSLRRHMRIH) adopts a C2H2-type 1; degenerate zinc-finger fold. 6 C2H2-type zinc fingers span residues 330–352 (YVCH…VRTH), 358–381 (YKCE…RMHH), 387–409 (YKCD…ARKH), 415–437 (YVCD…VRRH), 443–465 (YVCD…SRKH), and 471–494 (FICE…TKVH). The disordered stretch occupies residues 489 to 538 (HKTKVHSGADKTPDSSAEDHTLSEQDSIQKSPLSETMDVKPSDTTLPLAL). Basic and acidic residues predominate over residues 495–511 (SGADKTPDSSAEDHTLS). A compositionally biased stretch (polar residues) spans 512 to 522 (EQDSIQKSPLS).

It belongs to the krueppel C2H2-type zinc-finger protein family.

The protein resides in the nucleus. The protein is Myoneurin (MYNN) of Pongo abelii (Sumatran orangutan).